The following is a 196-amino-acid chain: Phosphoheptose isomerase (196 aa).

Residues 31 to 196 (VARQFKAGNK…KAGLEAQIAV (166 aa)) enclose the SIS domain. 46 to 48 (NGG) contacts substrate. Zn(2+) is bound by residues H55 and E59. Substrate is bound by residues E59, 88–89 (ND), 114–116 (STS), S119, and Q166. Q166 and H174 together coordinate Zn(2+).

Belongs to the SIS family. GmhA subfamily. It depends on Zn(2+) as a cofactor.

The protein localises to the cytoplasm. The catalysed reaction is 2 D-sedoheptulose 7-phosphate = D-glycero-alpha-D-manno-heptose 7-phosphate + D-glycero-beta-D-manno-heptose 7-phosphate. The protein operates within carbohydrate biosynthesis; D-glycero-D-manno-heptose 7-phosphate biosynthesis; D-glycero-alpha-D-manno-heptose 7-phosphate and D-glycero-beta-D-manno-heptose 7-phosphate from sedoheptulose 7-phosphate: step 1/1. Its function is as follows. Catalyzes the isomerization of sedoheptulose 7-phosphate in D-glycero-D-manno-heptose 7-phosphate. The protein is Phosphoheptose isomerase of Crocosphaera subtropica (strain ATCC 51142 / BH68) (Cyanothece sp. (strain ATCC 51142)).